The primary structure comprises 223 residues: Deoxyribose-phosphate aldolase (223 aa).

Asp-89 acts as the Proton donor/acceptor in catalysis. Catalysis depends on Lys-152, which acts as the Schiff-base intermediate with acetaldehyde. The active-site Proton donor/acceptor is Lys-181.

This sequence belongs to the DeoC/FbaB aldolase family. DeoC type 1 subfamily.

It localises to the cytoplasm. The enzyme catalyses 2-deoxy-D-ribose 5-phosphate = D-glyceraldehyde 3-phosphate + acetaldehyde. The protein operates within carbohydrate degradation; 2-deoxy-D-ribose 1-phosphate degradation; D-glyceraldehyde 3-phosphate and acetaldehyde from 2-deoxy-alpha-D-ribose 1-phosphate: step 2/2. Its function is as follows. Catalyzes a reversible aldol reaction between acetaldehyde and D-glyceraldehyde 3-phosphate to generate 2-deoxy-D-ribose 5-phosphate. The polypeptide is Deoxyribose-phosphate aldolase (Bacillus cereus (strain ZK / E33L)).